Reading from the N-terminus, the 430-residue chain is Adenylosuccinate synthetase (430 aa).

GTP is bound by residues 12 to 18 (GDEGKGK) and 40 to 42 (GHT). Residue Asp-13 is the Proton acceptor of the active site. Residues Asp-13 and Gly-40 each contribute to the Mg(2+) site. IMP-binding positions include 13–16 (DEGK), 38–41 (NAGH), Thr-128, Arg-142, Gln-223, Thr-238, and Arg-302. His-41 (proton donor) is an active-site residue. 298–304 (TTTGRPR) is a substrate binding site. GTP contacts are provided by residues Arg-304, 330–332 (SID), and 412–414 (SVG).

The protein belongs to the adenylosuccinate synthetase family. In terms of assembly, homodimer. Mg(2+) serves as cofactor.

The protein localises to the cytoplasm. The enzyme catalyses IMP + L-aspartate + GTP = N(6)-(1,2-dicarboxyethyl)-AMP + GDP + phosphate + 2 H(+). Its pathway is purine metabolism; AMP biosynthesis via de novo pathway; AMP from IMP: step 1/2. Plays an important role in the de novo pathway of purine nucleotide biosynthesis. Catalyzes the first committed step in the biosynthesis of AMP from IMP. This is Adenylosuccinate synthetase from Streptococcus pyogenes serotype M3 (strain ATCC BAA-595 / MGAS315).